Consider the following 157-residue polypeptide: Epithelial membrane protein 1 (157 aa).

A helical membrane pass occupies residues 1 to 21; the sequence is MLVLLAGIFVVHIATVIMLFV. 2 N-linked (GlcNAc...) asparagine glycosylation sites follow: N43 and N46. 3 consecutive transmembrane segments (helical) span residues 67 to 87, 95 to 115, and 134 to 154; these read FMIL…FQLF, FFLS…GVSI, and YILG…YLVL.

Belongs to the PMP-22/EMP/MP20 family.

The protein localises to the membrane. This Homo sapiens (Human) protein is Epithelial membrane protein 1 (EMP1).